The following is a 121-amino-acid chain: Small ribosomal subunit protein uS11 (121 aa).

It belongs to the universal ribosomal protein uS11 family. In terms of assembly, part of the 30S ribosomal subunit. Interacts with proteins S7 and S18. Binds to IF-3.

Its function is as follows. Located on the platform of the 30S subunit, it bridges several disparate RNA helices of the 16S rRNA. Forms part of the Shine-Dalgarno cleft in the 70S ribosome. The protein is Small ribosomal subunit protein uS11 of Mycoplasmoides gallisepticum (strain R(low / passage 15 / clone 2)) (Mycoplasma gallisepticum).